Here is a 611-residue protein sequence, read N- to C-terminus: MRPPWCPLYTPSLAAPILLLLLFLLGGGAEAEDPELLVTVRGGQLRGVRLMAPGGPVSAFLGIPFAEPPVGPRRFLPPEPKRPWPGVLDATAFQSVCYQYVDTLYPGFEGTEMWNPNRELSEDCLYLNVWTPYPRPASPTPVLVWIYGGGFYSGASSLDVYDGRFLAQAEGTVLVSMNYRVGAFGFLALPGSREAPGNVGLLDQRLALQWVQDNVATFGGDPMSVTLFGESAGAASVGMHLLSPPSRGLFHRAVLQSGAPNGPWATVGVGEARRRATLLARLVGCPPGGAGGNDTELVACLRTRPAQDLVDHEWHVLPQESVFRFSFVPVVDGDFLSDTPEALINAGDFHGLQVLVGVVKDEGSYFLVYGAPGFSKDNESLISRAQFLAGVRVGVPQASDLAAEAVVLHYTDWLNPEDPARLREAMSDVVGDHNVVCPVAQLAGRLAAQGARVYAYIFEHRASTLSWPLWMGVPHGYEIEFIFGLPLEPSLNYTAEERIFAQRLMRYWANFARTGDPNDPRDPKVPQWPPYTAGAQQYVSLDLRPLEVRRGLRAQACAFWNRFLPKLLSATDTLDEAERQWKAEFHRWSSYMVHWKNQFDHYSKQDRCSDL.

Residues 1–31 (MRPPWCPLYTPSLAAPILLLLLFLLGGGAEA) form the signal peptide. C97 and C124 are disulfide-bonded. The active-site Acyl-ester intermediate is S231. A disulfide bond links C285 and C300. N-linked (GlcNAc...) asparagine glycosylation occurs at N293. E362 functions as the Charge relay system in the catalytic mechanism. The N-linked (GlcNAc...) asparagine glycan is linked to N378. C437 and C557 are oxidised to a cystine. Residue H475 is the Charge relay system of the active site. A glycan (N-linked (GlcNAc...) asparagine) is linked at N492.

The protein belongs to the type-B carboxylesterase/lipase family. In terms of assembly, interacts with PRIMA1. The interaction with PRIMA1 is required to anchor it to the basal lamina of cells and organize into tetramers. Isoform H generates GPI-anchored dimers; disulfide linked. Isoform T generates multiple structures, ranging from monomers and dimers to collagen-tailed and hydrophobic-tailed forms, in which catalytic tetramers are associated with anchoring proteins that attach them to the basal lamina or to cell membranes. In the collagen-tailed forms, isoform T subunits are associated with a specific collagen, COLQ, which triggers the formation of isoform T tetramers, from monomers and dimers.

The protein localises to the synapse. Its subcellular location is the secreted. It is found in the cell membrane. It carries out the reaction acetylcholine + H2O = choline + acetate + H(+). In terms of biological role, terminates signal transduction at the neuromuscular junction by rapid hydrolysis of the acetylcholine released into the synaptic cleft. The sequence is that of Acetylcholinesterase (ACHE) from Felis catus (Cat).